The primary structure comprises 377 residues: N-acetyldiaminopimelate deacetylase (377 aa).

The active site involves Asp-70. Glu-129 functions as the Proton acceptor in the catalytic mechanism.

Belongs to the peptidase M20A family. N-acetyldiaminopimelate deacetylase subfamily.

The catalysed reaction is N-acetyl-(2S,6S)-2,6-diaminopimelate + H2O = (2S,6S)-2,6-diaminopimelate + acetate. Its pathway is amino-acid biosynthesis; L-lysine biosynthesis via DAP pathway; LL-2,6-diaminopimelate from (S)-tetrahydrodipicolinate (acetylase route): step 3/3. Its function is as follows. Catalyzes the conversion of N-acetyl-diaminopimelate to diaminopimelate and acetate. The protein is N-acetyldiaminopimelate deacetylase of Streptococcus thermophilus (strain ATCC BAA-491 / LMD-9).